The sequence spans 499 residues: Cobyric acid synthase (499 aa).

The GATase cobBQ-type domain occupies 251 to 442; sequence SLDIAVVSLK…LHGVFDNLEW (192 aa). Cys332 acts as the Nucleophile in catalysis. His434 is an active-site residue.

It belongs to the CobB/CobQ family. CobQ subfamily.

It functions in the pathway cofactor biosynthesis; adenosylcobalamin biosynthesis. Functionally, catalyzes amidations at positions B, D, E, and G on adenosylcobyrinic A,C-diamide. NH(2) groups are provided by glutamine, and one molecule of ATP is hydrogenolyzed for each amidation. This Streptococcus sanguinis (strain SK36) protein is Cobyric acid synthase.